The sequence spans 214 residues: Ribosomal RNA large subunit methyltransferase E (214 aa).

S-adenosyl-L-methionine contacts are provided by G60, W62, D86, D102, and D127. The active-site Proton acceptor is the K167.

Belongs to the class I-like SAM-binding methyltransferase superfamily. RNA methyltransferase RlmE family.

The protein localises to the cytoplasm. It carries out the reaction uridine(2552) in 23S rRNA + S-adenosyl-L-methionine = 2'-O-methyluridine(2552) in 23S rRNA + S-adenosyl-L-homocysteine + H(+). Its function is as follows. Specifically methylates the uridine in position 2552 of 23S rRNA at the 2'-O position of the ribose in the fully assembled 50S ribosomal subunit. This Janthinobacterium sp. (strain Marseille) (Minibacterium massiliensis) protein is Ribosomal RNA large subunit methyltransferase E.